We begin with the raw amino-acid sequence, 359 residues long: MKVLSYLKNFYLFLAIGAIMQASENMGSQHQKTDERVIYLAGGCFWGLEAYMERIYGVIDASSGYANGKTSSTNYEKLHESDHAESVKVIYDPKKISLDKLLRYYFKVVDPVSVNKQGNDVGRQYRTGIYYVNSADKEVIDHALKALQKEVKGKIAIEVEPLKNYVRAEEYHQDYLKKHPSGYCHIDLKKADEVIVDDDKYTKPSDEVLKKKLTKLQYEVTQNKHTEKPFENEYYNKEEEGIYVDITTGEPLFSSADKYDSGCGWPSFSKPINKDVVKYEDDESLNRKRIEVLSRIGKAHLGHVFNDGPKELGGLRYCINSAALRFIPLKDMEKEGYGEFIPYIKKGELKKYINDKKSH.

A peptide methionine sulfoxide reductase A region spans residues 36-189 (RVIYLAGGCF…PSGYCHIDLK (154 aa)). Residue Cys44 is part of the active site. The region spanning 206–329 (DEVLKKKLTK…NSAALRFIPL (124 aa)) is the MsrB domain. Cys318 serves as the catalytic Nucleophile.

This sequence in the N-terminal section; belongs to the MsrA Met sulfoxide reductase family. It in the C-terminal section; belongs to the MsrB Met sulfoxide reductase family.

It carries out the reaction L-methionyl-[protein] + [thioredoxin]-disulfide + H2O = L-methionyl-(S)-S-oxide-[protein] + [thioredoxin]-dithiol. The enzyme catalyses [thioredoxin]-disulfide + L-methionine + H2O = L-methionine (S)-S-oxide + [thioredoxin]-dithiol. It catalyses the reaction L-methionyl-[protein] + [thioredoxin]-disulfide + H2O = L-methionyl-(R)-S-oxide-[protein] + [thioredoxin]-dithiol. Its function is as follows. Has an important function as a repair enzyme for proteins that have been inactivated by oxidation. Catalyzes the reversible oxidation-reduction of methionine sulfoxide in proteins to methionine. The protein is Peptide methionine sulfoxide reductase MsrA/MsrB (msrAB) of Helicobacter pylori (strain ATCC 700392 / 26695) (Campylobacter pylori).